The primary structure comprises 126 residues: Protein Wnt-1 (126 aa).

The O-palmitoleoyl serine; by PORCN moiety is linked to residue S1. A disulfide bridge connects residues C92 and C107. 2 N-linked (GlcNAc...) asparagine glycosylation sites follow: N93 and N123.

This sequence belongs to the Wnt family. Palmitoleoylation is required for efficient binding to frizzled receptors. Palmitoleoylation is necessary for proper trafficking to cell surface. Depalmitoleoylated by NOTUM, leading to inhibit Wnt signaling pathway.

It is found in the secreted. The protein localises to the extracellular space. It localises to the extracellular matrix. Its function is as follows. Ligand for members of the frizzled family of seven transmembrane receptors. Acts in the canonical Wnt signaling pathway by promoting beta-catenin-dependent transcriptional activation. Plays an essential role in the development of the embryonic brain and central nervous system (CNS). Has a role in osteoblast function, bone development and bone homeostasis. The chain is Protein Wnt-1 (WNT-1) from Plestiodon skiltonianus (Western skink).